A 1589-amino-acid polypeptide reads, in one-letter code: Pentafunctional AROM polypeptide (1589 aa).

The segment at M1–N384 is 3-dehydroquinate synthase. Residues D44–T46, E81–K84, G114–V116, and D119 each bind NAD(+). R130 contacts 7-phospho-2-dehydro-3-deoxy-D-arabino-heptonate. T139–T140 lines the NAD(+) pocket. Residues D146 and K152 each coordinate 7-phospho-2-dehydro-3-deoxy-D-arabino-heptonate. K161 is a binding site for NAD(+). N162 contacts 7-phospho-2-dehydro-3-deoxy-D-arabino-heptonate. NAD(+)-binding positions include F179–T182 and N190. E194 is a Zn(2+) binding site. Residues E194 to K197 and K250 each bind 7-phospho-2-dehydro-3-deoxy-D-arabino-heptonate. The Proton acceptor; for 3-dehydroquinate synthase activity role is filled by E260. 7-phospho-2-dehydro-3-deoxy-D-arabino-heptonate contacts are provided by residues R264–N268 and H271. H271 contributes to the Zn(2+) binding site. H275 (proton acceptor; for 3-dehydroquinate synthase activity) is an active-site residue. H287 and K356 together coordinate 7-phospho-2-dehydro-3-deoxy-D-arabino-heptonate. Zn(2+) is bound at residue H287. The tract at residues V397–A841 is EPSP synthase. C823 serves as the catalytic For EPSP synthase activity. Residues A861–S1052 are shikimate kinase. G867 to T874 is an ATP binding site. Positions L1053 to D1273 are 3-dehydroquinase. H1176 serves as the catalytic Proton acceptor; for 3-dehydroquinate dehydratase activity. The active-site Schiff-base intermediate with substrate; for 3-dehydroquinate dehydratase activity is K1204. Residues P1286–G1589 are shikimate dehydrogenase.

In the N-terminal section; belongs to the sugar phosphate cyclases superfamily. Dehydroquinate synthase family. The protein in the 2nd section; belongs to the EPSP synthase family. This sequence in the 3rd section; belongs to the shikimate kinase family. It in the 4th section; belongs to the type-I 3-dehydroquinase family. In the C-terminal section; belongs to the shikimate dehydrogenase family. As to quaternary structure, homodimer. The cofactor is Zn(2+).

Its subcellular location is the cytoplasm. It carries out the reaction 7-phospho-2-dehydro-3-deoxy-D-arabino-heptonate = 3-dehydroquinate + phosphate. The catalysed reaction is 3-dehydroquinate = 3-dehydroshikimate + H2O. The enzyme catalyses shikimate + NADP(+) = 3-dehydroshikimate + NADPH + H(+). It catalyses the reaction shikimate + ATP = 3-phosphoshikimate + ADP + H(+). It carries out the reaction 3-phosphoshikimate + phosphoenolpyruvate = 5-O-(1-carboxyvinyl)-3-phosphoshikimate + phosphate. It participates in metabolic intermediate biosynthesis; chorismate biosynthesis; chorismate from D-erythrose 4-phosphate and phosphoenolpyruvate: step 2/7. Its pathway is metabolic intermediate biosynthesis; chorismate biosynthesis; chorismate from D-erythrose 4-phosphate and phosphoenolpyruvate: step 3/7. The protein operates within metabolic intermediate biosynthesis; chorismate biosynthesis; chorismate from D-erythrose 4-phosphate and phosphoenolpyruvate: step 4/7. It functions in the pathway metabolic intermediate biosynthesis; chorismate biosynthesis; chorismate from D-erythrose 4-phosphate and phosphoenolpyruvate: step 5/7. It participates in metabolic intermediate biosynthesis; chorismate biosynthesis; chorismate from D-erythrose 4-phosphate and phosphoenolpyruvate: step 6/7. Its function is as follows. The AROM polypeptide catalyzes 5 consecutive enzymatic reactions in prechorismate polyaromatic amino acid biosynthesis. The sequence is that of Pentafunctional AROM polypeptide from Coccidioides posadasii (strain C735) (Valley fever fungus).